We begin with the raw amino-acid sequence, 814 residues long: Oxysterol-binding protein-related protein 1C (814 aa).

In terms of domain architecture, PH spans Gly103–Asp235. Residues Leu300 to Asn367 adopt a coiled-coil conformation. Disordered stretches follow at residues Val319–Glu366 and Ser379–Lys411. Over residues Glu347–Glu366 the composition is skewed to acidic residues. The segment covering Ser379–Ser394 has biased composition (low complexity). Residues Ser395 to Asp407 show a composition bias toward acidic residues.

Belongs to the OSBP family. As to expression, expressed in roots, leaves, stems, flowers and pollen.

Its function is as follows. May be involved in the transport of sterols. In Arabidopsis thaliana (Mouse-ear cress), this protein is Oxysterol-binding protein-related protein 1C (ORP1C).